Consider the following 1104-residue polypeptide: Transposon Ty4-P Gag-Pol polyprotein (1104 aa).

Positions 48–112 (VKQYQRNLNR…VEKIQLLETN (65 aa)) form a coiled coil. A ty4 protease region spans residues 381 to 501 (QQQLKSSAKE…KTKMVLSRKY (121 aa)). Residue Asp-414 is the For protease activity; shared with dimeric partner of the active site. Residues 539–599 (AIKPTSSPGF…EPNEFWCQTC (61 aa)) form an integrase-type zinc finger-like region. The Integrase catalytic domain maps to 619–786 (TDHEPGSSWC…LPLKAISRQP (168 aa)). Mg(2+)-binding residues include Asp-630 and Asp-695.

In terms of assembly, the protease is a homodimer, whose active site consists of two apposed aspartic acid residues. Post-translationally, proteolytically processed into capsid protein (CA), Ty4 protease (PR), integrase (IN) and reverse transcriptase/ribonuclease H (RT) proteins. Initially, virus-like particles (VLPs) are composed of the structural unprocessed proteins Gag and Gag-Pol, and also contain the host initiator methionine tRNA (tRNA(i)-Met) which serves as a primer for minus-strand DNA synthesis, and a dimer of genomic Ty RNA. Processing of the polyproteins occurs within the particle and proceeds by an ordered pathway, called maturation. First, the protease (PR) is released by autocatalytic cleavage of the Gag-Pol polyprotein, and this cleavage is a prerequisite for subsequent processing at the remaining sites to release the mature structural and catalytic proteins. Maturation takes place prior to the RT reaction and is required to produce transposition-competent VLPs.

It localises to the cytoplasm. Its subcellular location is the nucleus. The enzyme catalyses DNA(n) + a 2'-deoxyribonucleoside 5'-triphosphate = DNA(n+1) + diphosphate. The catalysed reaction is Endonucleolytic cleavage to 5'-phosphomonoester.. In terms of biological role, capsid protein (CA) is the structural component of the virus-like particle (VLP), forming the shell that encapsulates the retrotransposons dimeric RNA genome. Its function is as follows. The aspartyl protease (PR) mediates the proteolytic cleavages of the Gag and Gag-Pol polyproteins after assembly of the VLP. Functionally, reverse transcriptase/ribonuclease H (RT) is a multifunctional enzyme that catalyzes the conversion of the retro-elements RNA genome into dsDNA within the VLP. The enzyme displays a DNA polymerase activity that can copy either DNA or RNA templates, and a ribonuclease H (RNase H) activity that cleaves the RNA strand of RNA-DNA heteroduplexes during plus-strand synthesis and hydrolyzes RNA primers. The conversion leads to a linear dsDNA copy of the retrotransposon that includes long terminal repeats (LTRs) at both ends. Integrase (IN) targets the VLP to the nucleus, where a subparticle preintegration complex (PIC) containing at least integrase and the newly synthesized dsDNA copy of the retrotransposon must transit the nuclear membrane. Once in the nucleus, integrase performs the integration of the dsDNA into the host genome. This Saccharomyces cerevisiae (strain ATCC 204508 / S288c) (Baker's yeast) protein is Transposon Ty4-P Gag-Pol polyprotein (TY4B-P).